The sequence spans 685 residues: Probable transcriptional regulator SLK3 (685 aa).

Disordered regions lie at residues 25–66 (NLPG…ENSY) and 108–129 (LQQQRVRQHQQMLQSMSPSQRL). The segment covering 39 to 56 (QHLPQQQQRQLLEQQAGQ) has biased composition (low complexity). The interval 176-423 (PAENCITYWR…EHKVGPLEGL (248 aa)) is dimerization. The Nuclear localization signal signature appears at 185 to 199 (RKFVAEYFSPRAKQR). Polar residues predominate over residues 447 to 459 (GNSGAMSGPAQAQ). 3 disordered regions span residues 447-491 (GNSG…MNGS), 512-591 (NNQN…NTQE), and 611-658 (QQQA…NNLP). The segment covering 460–471 (MTLSSGTMSGST) has biased composition (low complexity). A compositionally biased stretch (polar residues) spans 512 to 524 (NNQNSNTGNQEGF). Positions 525–543 (SSQNPTLNSNQSPSSSSQQ) are enriched in low complexity. 3 stretches are compositionally biased toward polar residues: residues 544–588 (RENL…SHGN), 611–636 (QQQAFPGQSGSNNNTERNTTASTSNI), and 645–658 (RINSFKASSNNNLP).

It belongs to the adn1/SEU family.

It is found in the nucleus. Probable transcription regulator that functions in the development of the carpel margin meristem similarly to SEUSS (SEU). In association with SEU, supports organ development from meristematic regions by facilitating auxin response and thus organ initiation, and by sustaining meristematic potential through the maintenance of PHABULOSA expression. This Arabidopsis thaliana (Mouse-ear cress) protein is Probable transcriptional regulator SLK3 (SLK3).